Consider the following 270-residue polypeptide: uncharacterized protein (270 aa).

This is an uncharacterized protein from Bacillus subtilis (strain 168).